Reading from the N-terminus, the 116-residue chain is Large ribosomal subunit protein bL19 (116 aa).

The protein belongs to the bacterial ribosomal protein bL19 family.

Its function is as follows. This protein is located at the 30S-50S ribosomal subunit interface and may play a role in the structure and function of the aminoacyl-tRNA binding site. The sequence is that of Large ribosomal subunit protein bL19 from Clostridium novyi (strain NT).